Reading from the N-terminus, the 292-residue chain is Protoheme IX farnesyltransferase (292 aa).

Transmembrane regions (helical) follow at residues 13–33 (ILFG…QGHV), 35–55 (FLLL…GCVV), 84–104 (TALI…WFWV), 106–126 (PYSF…YSLW), 135–155 (TIIG…AVTH), 161–181 (ALLI…AIAI), 206–226 (VECL…YCFG), 231–251 (FFLL…IIGF), and 263–283 (LFLF…FTYQ).

The protein belongs to the UbiA prenyltransferase family. Protoheme IX farnesyltransferase subfamily.

The protein resides in the cell inner membrane. It carries out the reaction heme b + (2E,6E)-farnesyl diphosphate + H2O = Fe(II)-heme o + diphosphate. The protein operates within porphyrin-containing compound metabolism; heme O biosynthesis; heme O from protoheme: step 1/1. Converts heme B (protoheme IX) to heme O by substitution of the vinyl group on carbon 2 of heme B porphyrin ring with a hydroxyethyl farnesyl side group. This chain is Protoheme IX farnesyltransferase, found in Acinetobacter baylyi (strain ATCC 33305 / BD413 / ADP1).